The sequence spans 336 residues: Tryptophan--tRNA ligase (336 aa).

ATP-binding positions include 16-18 (QPT) and 24-25 (GN). Positions 17-25 (PTGQLHLGN) match the 'HIGH' region motif. An L-tryptophan-binding site is contributed by D140. Residues 152–154 (GED), V191, and 200–204 (KMSKS) each bind ATP. Positions 200–204 (KMSKS) match the 'KMSKS' region motif.

It belongs to the class-I aminoacyl-tRNA synthetase family. As to quaternary structure, homodimer.

It is found in the cytoplasm. The enzyme catalyses tRNA(Trp) + L-tryptophan + ATP = L-tryptophyl-tRNA(Trp) + AMP + diphosphate + H(+). Its function is as follows. Catalyzes the attachment of tryptophan to tRNA(Trp). This Gloeobacter violaceus (strain ATCC 29082 / PCC 7421) protein is Tryptophan--tRNA ligase.